Here is a 449-residue protein sequence, read N- to C-terminus: Elongation factor 1-alpha C (449 aa).

One can recognise a tr-type G domain in the interval 5–234; that stretch reads KQHVSIVVIG…DACDPPKRPV (230 aa). Residues 14-21 form a G1 region; that stretch reads GHVDSGKS. 14 to 21 is a GTP binding site; it reads GHVDSGKS. The residue at position 55 (lysine 55) is an N6,N6-dimethyllysine. The segment at 70–74 is G2; the sequence is GITID. At lysine 79 the chain carries N6,N6,N6-trimethyllysine. A G3 region spans residues 91 to 94; that stretch reads DAPG. GTP-binding positions include 91 to 95 and 153 to 156; these read DAPGH and NKMD. Residues 153 to 156 form a G4 region; the sequence is NKMD. Position 187 is an N6,N6,N6-trimethyllysine (lysine 187). Residues 194-196 form a G5 region; the sequence is SGW. At lysine 265 the chain carries N6-methyllysine. N6,N6,N6-trimethyllysine is present on residues lysine 310 and lysine 400.

It belongs to the TRAFAC class translation factor GTPase superfamily. Classic translation factor GTPase family. EF-Tu/EF-1A subfamily.

It is found in the cytoplasm. This protein promotes the GTP-dependent binding of aminoacyl-tRNA to the A-site of ribosomes during protein biosynthesis. This chain is Elongation factor 1-alpha C (TEF-C), found in Porphyra purpurea (Red seaweed).